We begin with the raw amino-acid sequence, 478 residues long: tRNA (guanine(10)-N(2))-methyltransferase TRMT11 (478 aa).

Residues 457-478 (EERARSEMANAENVKSKGKEDV) form a disordered region.

The protein belongs to the class I-like SAM-binding methyltransferase superfamily. TRM11 methyltransferase family. As to quaternary structure, part of the heterodimeric TRMT11-TRM112 methyltransferase complex; this complex forms an active tRNA methyltransferase, where TRMT112 acts as an activator of the catalytic subunit TRMT11.

It is found in the cytoplasm. The enzyme catalyses guanosine(10) in tRNA + S-adenosyl-L-methionine = N(2)-methylguanosine(10) in tRNA + S-adenosyl-L-homocysteine + H(+). In terms of biological role, catalytic subunit of the TRMT11-TRM112 methyltransferase complex, that specifically mediates the S-adenosyl-L-methionine-dependent N(2)-methylation of guanosine nucleotide at position 10 (m2G10) in tRNAs. This is one of the major tRNA (guanine-N(2))-methyltransferases. This is tRNA (guanine(10)-N(2))-methyltransferase TRMT11 (trmt11.L) from Xenopus laevis (African clawed frog).